The following is a 204-amino-acid chain: Somatotropin (204 aa).

A signal peptide spans 1-17 (MDRVVLLLSVLSLGVSS). Residue Q18 is modified to Pyrrolidone carboxylic acid. H36 is a binding site for Zn(2+). An intrachain disulfide couples C69 to C177. Residue E186 coordinates Zn(2+). C194 and C202 are disulfide-bonded.

This sequence belongs to the somatotropin/prolactin family.

The protein resides in the secreted. Its function is as follows. Growth hormone plays an important role in growth control and is involved in the regulation of several anabolic processes. Implicated as an osmoregulatory substance important for seawater adaptation. The polypeptide is Somatotropin (gh) (Lates calcarifer (Barramundi)).